We begin with the raw amino-acid sequence, 131 residues long: Profilin-6 (131 aa).

Cys-13 and Cys-115 are joined by a disulfide. The Involved in PIP2 interaction motif lies at Ala-81–Thr-97. Thr-111 bears the Phosphothreonine mark.

This sequence belongs to the profilin family. In terms of assembly, occurs in many kinds of cells as a complex with monomeric actin in a 1:1 ratio. Phosphorylated by MAP kinases.

Its subcellular location is the cytoplasm. It localises to the cytoskeleton. Binds to actin and affects the structure of the cytoskeleton. At high concentrations, profilin prevents the polymerization of actin, whereas it enhances it at low concentrations. The polypeptide is Profilin-6 (Phleum pratense (Common timothy)).